The sequence spans 112 residues: T cell receptor alpha variable 9-1 (112 aa).

An N-terminal signal peptide occupies residues 1–20 (MNSSPGPAIALFLMFGGING). One can recognise an Ig-like domain in the interval 21 to 112 (DSVVQTEGQV…DSAVYFCALS (92 aa)). An N-linked (GlcNAc...) asparagine glycan is attached at Asn-41. An intrachain disulfide couples Cys-42 to Cys-109.

In terms of assembly, alpha-beta TR is a heterodimer composed of an alpha and beta chain; disulfide-linked. The alpha-beta TR is associated with the transmembrane signaling CD3 coreceptor proteins to form the TR-CD3 (TcR or TCR). The assembly of alpha-beta TR heterodimers with CD3 occurs in the endoplasmic reticulum where a single alpha-beta TR heterodimer associates with one CD3D-CD3E heterodimer, one CD3G-CD3E heterodimer and one CD247 homodimer forming a stable octameric structure. CD3D-CD3E and CD3G-CD3E heterodimers preferentially associate with TR alpha and TR beta chains, respectively. The association of the CD247 homodimer is the last step of TcR assembly in the endoplasmic reticulum and is required for transport to the cell surface.

The protein localises to the cell membrane. Functionally, v region of the variable domain of T cell receptor (TR) alpha chain that participates in the antigen recognition. Alpha-beta T cell receptors are antigen specific receptors which are essential to the immune response and are present on the cell surface of T lymphocytes. Recognize peptide-major histocompatibility (MH) (pMH) complexes that are displayed by antigen presenting cells (APC), a prerequisite for efficient T cell adaptive immunity against pathogens. Binding of alpha-beta TR to pMH complex initiates TR-CD3 clustering on the cell surface and intracellular activation of LCK that phosphorylates the ITAM motifs of CD3G, CD3D, CD3E and CD247 enabling the recruitment of ZAP70. In turn ZAP70 phosphorylates LAT, which recruits numerous signaling molecules to form the LAT signalosome. The LAT signalosome propagates signal branching to three major signaling pathways, the calcium, the mitogen-activated protein kinase (MAPK) kinase and the nuclear factor NF-kappa-B (NF-kB) pathways, leading to the mobilization of transcription factors that are critical for gene expression and essential for T cell growth and differentiation. The T cell repertoire is generated in the thymus, by V-(D)-J rearrangement. This repertoire is then shaped by intrathymic selection events to generate a peripheral T cell pool of self-MH restricted, non-autoaggressive T cells. Post-thymic interaction of alpha-beta TR with the pMH complexes shapes TR structural and functional avidity. The polypeptide is T cell receptor alpha variable 9-1 (Homo sapiens (Human)).